Reading from the N-terminus, the 29-residue chain is Dermaseptin-J8 (29 aa).

In terms of tissue distribution, expressed by the skin glands.

It is found in the secreted. In terms of biological role, has antimicrobial activity. The chain is Dermaseptin-J8 from Phasmahyla jandaia (Jandaia leaf frog).